Consider the following 409-residue polypeptide: Probable glutaryl-CoA dehydrogenase, mitochondrial (409 aa).

110–111 (RS) is a binding site for substrate. FAD-binding positions include 149-152 (FGLT), S158, and 184-186 (WIS). Position 158 (S158) interacts with substrate. Substrate contacts are provided by residues 261 to 265 (FGCLN) and R268. E388 serves as the catalytic Proton acceptor. Residues T390 and F408 each coordinate FAD.

The protein belongs to the acyl-CoA dehydrogenase family. It depends on FAD as a cofactor.

The protein resides in the mitochondrion matrix. It carries out the reaction glutaryl-CoA + oxidized [electron-transfer flavoprotein] + 2 H(+) = (2E)-butenoyl-CoA + reduced [electron-transfer flavoprotein] + CO2. The protein operates within amino-acid metabolism; lysine degradation. Its pathway is amino-acid metabolism; tryptophan metabolism. This chain is Probable glutaryl-CoA dehydrogenase, mitochondrial, found in Caenorhabditis elegans.